We begin with the raw amino-acid sequence, 388 residues long: 1-deoxy-D-xylulose 5-phosphate reductoisomerase (388 aa).

T10, G11, S12, I13, K37, N38, and N123 together coordinate NADPH. Residue K124 participates in 1-deoxy-D-xylulose 5-phosphate binding. An NADPH-binding site is contributed by E125. Residue D149 coordinates Mn(2+). 1-deoxy-D-xylulose 5-phosphate contacts are provided by S150, E151, S175, and H198. E151 lines the Mn(2+) pocket. NADPH is bound at residue G204. S211, N216, K217, and E220 together coordinate 1-deoxy-D-xylulose 5-phosphate. Position 220 (E220) interacts with Mn(2+).

Belongs to the DXR family. Mg(2+) serves as cofactor. Requires Mn(2+) as cofactor.

It catalyses the reaction 2-C-methyl-D-erythritol 4-phosphate + NADP(+) = 1-deoxy-D-xylulose 5-phosphate + NADPH + H(+). It participates in isoprenoid biosynthesis; isopentenyl diphosphate biosynthesis via DXP pathway; isopentenyl diphosphate from 1-deoxy-D-xylulose 5-phosphate: step 1/6. Its function is as follows. Catalyzes the NADPH-dependent rearrangement and reduction of 1-deoxy-D-xylulose-5-phosphate (DXP) to 2-C-methyl-D-erythritol 4-phosphate (MEP). This is 1-deoxy-D-xylulose 5-phosphate reductoisomerase from Pelagibacter ubique (strain HTCC1062).